Here is a 572-residue protein sequence, read N- to C-terminus: Glypican-5 (572 aa).

Residues 1–24 form the signal peptide; sequence MDARTWRLGWRCLLLLALLGSTRS. N-linked (GlcNAc...) asparagine glycans are attached at residues Asn-120 and Asn-237. Ser-486 carries O-linked (Xyl...) (glycosaminoglycan) serine glycosylation. Asn-493 is a glycosylation site (N-linked (GlcNAc...) asparagine). O-linked (Xyl...) (glycosaminoglycan) serine glycosylation is found at Ser-495, Ser-507, and Ser-509. Asn-527 is a glycosylation site (N-linked (GlcNAc...) asparagine).

Belongs to the glypican family.

The protein resides in the cell membrane. Its subcellular location is the secreted. The protein localises to the extracellular space. Its function is as follows. Cell surface proteoglycan that bears heparan sulfate. The sequence is that of Glypican-5 (Gpc5) from Mus musculus (Mouse).